The sequence spans 1678 residues: Nuclear pore complex protein Nup98-Nup96 (1678 aa).

A compositionally biased stretch (low complexity) spans 1–11 (MFGQNKSFGSS). Disordered regions lie at residues 1-41 (MFGQ…QPAN), 68-100 (SSIF…FGST), 301-366 (TTGS…GAPA), 441-473 (FGNT…TQAT), and 603-631 (SKEA…RSVH). Residues 12 to 22 (SFGGGSSGSGL) are compositionally biased toward gly residues. 2 stretches are compositionally biased toward low complexity: residues 23-38 (FGQN…LFGQ) and 73-83 (SPQQPQNNQSS). The segment covering 306–329 (LFGNQQPQTNTGGSLFGNTQNQNQ) has biased composition (polar residues). Over residues 345–366 (FGQAQQQPQQQSSGFSFGGAPA) the composition is skewed to low complexity. 2 stretches are compositionally biased toward polar residues: residues 456 to 473 (SQPQ…TQAT) and 615 to 628 (RNST…LTNR). One can recognise a Peptidase S59 domain in the interval 777–919 (KPDYFSLPTI…GSWVFRVDHF (143 aa)). Residue S920 is the Nucleophile of the active site.

It belongs to the nucleoporin GLFG family. Part of the NPC. Post-translationally, the Nup98 and Nup96 chains are autoproteolytically processed from a single precursor protein.

Its subcellular location is the cytoplasmic granule. It is found in the nucleus membrane. The protein resides in the nucleus. The protein localises to the nuclear pore complex. It localises to the nucleus envelope. Its subcellular location is the chromosome. Functionally, nup98 and Nup96 play a role in the bidirectional transport across the nucleoporin complex (NPC). Required for the nuclear import of hcp-4 during mitotic prophase, this step is essential for centrosome assembly and resolution. Regulates nucleoporin npp-5 localization to the nuclear membrane during interphase and to kinetochores during metaphase. Has a role in P granule integrity; may promote the 'liquid phase' of P granules by increasing the number of interacting RNA-protein complexes. Binds nos-2 mRNA, probably indirectly, and promotes its accumulation in P granules. In Caenorhabditis elegans, this protein is Nuclear pore complex protein Nup98-Nup96.